Reading from the N-terminus, the 142-residue chain is Putative pre-16S rRNA nuclease (142 aa).

Belongs to the YqgF nuclease family.

It is found in the cytoplasm. Functionally, could be a nuclease involved in processing of the 5'-end of pre-16S rRNA. The chain is Putative pre-16S rRNA nuclease from Staphylococcus saprophyticus subsp. saprophyticus (strain ATCC 15305 / DSM 20229 / NCIMB 8711 / NCTC 7292 / S-41).